The sequence spans 507 residues: F-box only protein 31 (507 aa).

Residues 19-42 form a disordered region; the sequence is RQQRRGPAETAAADSEADTDPEEE. S33 is modified (phosphoserine). Residues 33–42 show a composition bias toward acidic residues; it reads SEADTDPEEE. Position 37 is a phosphothreonine (T37). The D box motif lies at 50–55; that stretch reads RCSLLE. The 47-residue stretch at 50–96 folds into the F-box domain; the sequence is RCSLLELPPELLVEIFASLPGTDLPSLAQVCSRFRRILHTDTIWRRR. Zn(2+) contacts are provided by C192, H200, C216, and H222. S264 carries the phosphoserine; by ATM modification. Positions 283–285 match the DDL motif motif; it reads DDL. Residues 366–417 form a disordered region; sequence EQEAGEGAAPPREPSAKAADGPPAKDGKEPGGGAEAAEQSASSGQGQPFVLP. Low complexity predominate over residues 400-412; sequence EAAEQSASSGQGQ. Position 448 is a phosphoserine (S448).

The protein belongs to the FBXO31 family. Part of a SCF (SKP1-cullin-F-box) protein ligase complex SCF(FBXO31) composed of CUL1, SKP1, RBX1 and FBXO31. Interacts (when phosphorylated at Ser-33) with CDC20, promoting ubiquitination by the APC/C complex. Post-translationally, phosphorylation at Ser-264 by ATM following gamma-irradiation results in its stabilization. Phosphorylation at Ser-448 in absence of stress promotes its ubiquitination and degradation by the SCF(FBXO46) complex. Phosphorylation at Ser-33 by AKT1 promotes association with CDC20 and ubiquitination by the APC/C complex. In terms of processing, ubiquitinated by the SCF(FBXO46) complex in absence of stress, promoting its degradation. Ubiquitinated by the APC/C complex following phosphorylation at Ser-33, leading to its degradation by the proteasome.

It is found in the cytoplasm. The protein resides in the cytoskeleton. Its subcellular location is the microtubule organizing center. The protein localises to the centrosome. It participates in protein modification; protein ubiquitination. Functionally, substrate-recognition component of the SCF(FBXO31) protein ligase complex, which specifically mediates the ubiquitination of proteins amidated at their C-terminus in response to oxidative stress, leading to their degradation by the proteasome. FBXO31 specifically recognizes and binds C-terminal peptides bearing an amide: C-terminal amidation in response to oxidative stress takes place following protein fragmentation. The SCF(FBXO31) also plays a role in G1 arrest following DNA damage by mediating ubiquitination of phosphorylated cyclin-D1 (CCND1), promoting its degradation by the proteasome, resulting in G1 arrest. The SCF(FBXO31) complex is however not a major regulator of CCND1 stability during the G1/S transition. In response to genotoxic stress, the SCF(FBXO31) complex directs ubiquitination and degradation of phosphorylated MDM2, thereby promoting p53/TP53-mediated DNA damage response. SCF(FBXO31) complex is required for genomic integrity by catalyzing ubiquitination and degradation of cyclin-A (CCNA1 and/or CCNA2) during the G1 phase. In response to genotoxic stress, the SCF(FBXO31) complex directs ubiquitination and degradation of phosphorylated FBXO46 and MAP2K6. SCF(FBXO31) complex promotes ubiquitination and degradation of CDT1 during the G2 phase to prevent re-replication. The SCF(FBXO31) complex also mediates ubiquitination and degradation of DUSP6, OGT and PARD6A. The protein is F-box only protein 31 of Mus musculus (Mouse).